A 248-amino-acid chain; its full sequence is Adenosylcobinamide-GDP ribazoletransferase (248 aa).

Transmembrane regions (helical) follow at residues 36-56 (FFLPVVASIIGGMEFLIYLGL), 59-79 (FLPSNVIIVLLLLFTAMITGG), 114-134 (GTIALIIDLLLKYQLLYSLVL), 137-157 (YSIAIFLAPIIGRISILFLCL), 170-190 (IFIGNMSKPIVFFISTIVLVL), and 199-219 (ATIIPFIGALLITYLLYLLCL).

Belongs to the CobS family. Mg(2+) is required as a cofactor.

Its subcellular location is the cell membrane. The catalysed reaction is alpha-ribazole + adenosylcob(III)inamide-GDP = adenosylcob(III)alamin + GMP + H(+). It carries out the reaction alpha-ribazole 5'-phosphate + adenosylcob(III)inamide-GDP = adenosylcob(III)alamin 5'-phosphate + GMP + H(+). It participates in cofactor biosynthesis; adenosylcobalamin biosynthesis; adenosylcobalamin from cob(II)yrinate a,c-diamide: step 7/7. Functionally, joins adenosylcobinamide-GDP and alpha-ribazole to generate adenosylcobalamin (Ado-cobalamin). Also synthesizes adenosylcobalamin 5'-phosphate from adenosylcobinamide-GDP and alpha-ribazole 5'-phosphate. This is Adenosylcobinamide-GDP ribazoletransferase from Clostridium botulinum (strain Loch Maree / Type A3).